A 313-amino-acid polypeptide reads, in one-letter code: Dihydroorotate dehydrogenase B (NAD(+)), catalytic subunit (313 aa).

Residues serine 21 and 45–46 each bind FMN; that span reads KA. Substrate contacts are provided by residues lysine 45 and 69–73; that span reads NAIGL. FMN-binding residues include asparagine 99 and asparagine 127. Asparagine 127 contributes to the substrate binding site. Cysteine 130 (nucleophile) is an active-site residue. Residues lysine 165 and isoleucine 191 each contribute to the FMN site. Residue 192–193 coordinates substrate; sequence NT. Residues glycine 217, 243–244, and 265–266 contribute to the FMN site; these read GG and GT.

The protein belongs to the dihydroorotate dehydrogenase family. Type 1 subfamily. Heterotetramer of 2 PyrK and 2 PyrD type B subunits. The cofactor is FMN.

The protein localises to the cytoplasm. The enzyme catalyses (S)-dihydroorotate + NAD(+) = orotate + NADH + H(+). It participates in pyrimidine metabolism; UMP biosynthesis via de novo pathway; orotate from (S)-dihydroorotate (NAD(+) route): step 1/1. Functionally, catalyzes the conversion of dihydroorotate to orotate with NAD(+) as electron acceptor. This is Dihydroorotate dehydrogenase B (NAD(+)), catalytic subunit (pyrD) from Geobacillus sp. (strain WCH70).